A 224-amino-acid chain; its full sequence is UPF0758 protein ABO_0214 (224 aa).

One can recognise an MPN domain in the interval 102 to 224 (PLDNPDKAGQ…WVSLASRGAV (123 aa)). Residues H173, H175, and D186 each coordinate Zn(2+). Positions 173–186 (HNHPSGVAEPSQSD) match the JAMM motif motif.

It belongs to the UPF0758 family.

The protein is UPF0758 protein ABO_0214 of Alcanivorax borkumensis (strain ATCC 700651 / DSM 11573 / NCIMB 13689 / SK2).